The sequence spans 394 residues: Quinolinate synthase (394 aa).

Iminosuccinate-binding residues include histidine 67 and serine 84. Cysteine 131 is a [4Fe-4S] cluster binding site. Iminosuccinate contacts are provided by residues 163–165 (YMN) and serine 184. Cysteine 254 contacts [4Fe-4S] cluster. Iminosuccinate-binding positions include 280–282 (HPE) and threonine 297. Cysteine 346 lines the [4Fe-4S] cluster pocket.

The protein belongs to the quinolinate synthase family. Type 3 subfamily. Requires [4Fe-4S] cluster as cofactor.

It localises to the cytoplasm. The catalysed reaction is iminosuccinate + dihydroxyacetone phosphate = quinolinate + phosphate + 2 H2O + H(+). It functions in the pathway cofactor biosynthesis; NAD(+) biosynthesis; quinolinate from iminoaspartate: step 1/1. Catalyzes the condensation of iminoaspartate with dihydroxyacetone phosphate to form quinolinate. This Streptomyces coelicolor (strain ATCC BAA-471 / A3(2) / M145) protein is Quinolinate synthase.